We begin with the raw amino-acid sequence, 439 residues long: MRFRLALSLLSLALFAAPAAAQLEVDITGGIAQPMPIAIPGMPTPAVANTPAGDTAALGQRVADVVTNDLKNSGLFSPLPKSALQTVTHPQVTAPDYMFWTQSGAQALIQGFVQANGDGSLTVGCYLYDVLARTELTRQGFVVQPAQWRRAAHKCADLVYTRLTGEGPYFDSRVVYVSETGPKTNRIKRLAIMDQDGANHRFLTNGQTIVLTPRFAPNQQTITYMSYTNNRARVYVYDIGSGSQRLVVDQPNMTFAPRFSPDGRTIVFSMAVGGNTDIYRVSAGGGTPQRLTTSPGIDTGASYSPDGSKIVFESDRSGTQQLYVMNADGSNQNRISFGSGRYGSAAWSPRGDLIAFTKIGGGFNVGIMNIDGSGEKILTNGWQDEGPSWSPNGRVIMFFRTAQGSGKADLWSVDLTGVNERPVPTPLDGSDPAWGPLLP.

Residues 1–21 (MRFRLALSLLSLALFAAPAAA) form the signal peptide.

The protein belongs to the TolB family. In terms of assembly, the Tol-Pal system is composed of five core proteins: the inner membrane proteins TolA, TolQ and TolR, the periplasmic protein TolB and the outer membrane protein Pal. They form a network linking the inner and outer membranes and the peptidoglycan layer.

It localises to the periplasm. Its function is as follows. Part of the Tol-Pal system, which plays a role in outer membrane invagination during cell division and is important for maintaining outer membrane integrity. The sequence is that of Tol-Pal system protein TolB from Rhizorhabdus wittichii (strain DSM 6014 / CCUG 31198 / JCM 15750 / NBRC 105917 / EY 4224 / RW1) (Sphingomonas wittichii).